Consider the following 556-residue polypeptide: Formate--tetrahydrofolate ligase (556 aa).

Position 64 to 71 (64 to 71 (TPAGEGKT)) interacts with ATP.

This sequence belongs to the formate--tetrahydrofolate ligase family.

The catalysed reaction is (6S)-5,6,7,8-tetrahydrofolate + formate + ATP = (6R)-10-formyltetrahydrofolate + ADP + phosphate. The protein operates within one-carbon metabolism; tetrahydrofolate interconversion. This is Formate--tetrahydrofolate ligase from Actinobacillus pleuropneumoniae serotype 5b (strain L20).